A 221-amino-acid polypeptide reads, in one-letter code: UPF0502 protein VSAL_II0605 (221 aa).

This sequence belongs to the UPF0502 family.

The chain is UPF0502 protein VSAL_II0605 from Aliivibrio salmonicida (strain LFI1238) (Vibrio salmonicida (strain LFI1238)).